The following is a 295-amino-acid chain: Pyridoxal 5'-phosphate synthase subunit PdxS (295 aa).

Position 25 (aspartate 25) interacts with D-ribose 5-phosphate. Lysine 82 acts as the Schiff-base intermediate with D-ribose 5-phosphate in catalysis. Residue glycine 154 participates in D-ribose 5-phosphate binding. Arginine 166 serves as a coordination point for D-glyceraldehyde 3-phosphate. D-ribose 5-phosphate contacts are provided by residues glycine 215 and 236–237; that span reads GS.

It belongs to the PdxS/SNZ family. In terms of assembly, in the presence of PdxT, forms a dodecamer of heterodimers.

It carries out the reaction aldehydo-D-ribose 5-phosphate + D-glyceraldehyde 3-phosphate + L-glutamine = pyridoxal 5'-phosphate + L-glutamate + phosphate + 3 H2O + H(+). It functions in the pathway cofactor biosynthesis; pyridoxal 5'-phosphate biosynthesis. Functionally, catalyzes the formation of pyridoxal 5'-phosphate from ribose 5-phosphate (RBP), glyceraldehyde 3-phosphate (G3P) and ammonia. The ammonia is provided by the PdxT subunit. Can also use ribulose 5-phosphate and dihydroxyacetone phosphate as substrates, resulting from enzyme-catalyzed isomerization of RBP and G3P, respectively. The chain is Pyridoxal 5'-phosphate synthase subunit PdxS from Bacillus cereus (strain B4264).